The primary structure comprises 462 residues: Glycine--tRNA ligase (462 aa).

Substrate-binding residues include Arg-101 and Glu-164. ATP contacts are provided by residues Arg-196–Glu-198, Phe-206–Phe-211, Glu-283–Leu-284, and Gly-327–Arg-330. A substrate-binding site is contributed by Phe-211–Glu-215. Position 323 to 327 (Glu-323 to Gly-327) interacts with substrate.

The protein belongs to the class-II aminoacyl-tRNA synthetase family. In terms of assembly, homodimer.

The protein resides in the cytoplasm. It catalyses the reaction tRNA(Gly) + glycine + ATP = glycyl-tRNA(Gly) + AMP + diphosphate. In terms of biological role, catalyzes the attachment of glycine to tRNA(Gly). This Thermobifida fusca (strain YX) protein is Glycine--tRNA ligase.